We begin with the raw amino-acid sequence, 375 residues long: Phosphoglycerate kinase (375 aa).

(2R)-3-phosphoglycerate contacts are provided by Val1, Asp2, Phe3, Asn4, Arg17, Ser40, His41, Gly43, Arg44, Leu99, Arg100, His147, and Arg148. Gly191 contacts ADP. Gly191 serves as a coordination point for CDP. AMP-binding residues include Ala192 and Lys193. ATP is bound at residue Ala192. A Mg(2+)-binding site is contributed by Ala192. Asp196 lines the CDP pocket. Residue Asp196 coordinates Mg(2+). Lys197 lines the AMP pocket. Residue Lys197 coordinates ATP. An ADP-binding site is contributed by Gly215. Gly215 provides a ligand contact to CDP. AMP contacts are provided by Gly216 and Gly290. Residues Gly216 and Gly290 each coordinate ATP. CDP contacts are provided by Gly315 and Phe320. Residue Phe320 participates in ADP binding. An AMP-binding site is contributed by Glu321. ATP-binding residues include Glu321, Asp352, and Thr353. Asp352 is a binding site for Mg(2+).

This sequence belongs to the phosphoglycerate kinase family. As to quaternary structure, monomer. Requires Mg(2+) as cofactor.

The enzyme catalyses (2R)-3-phosphoglycerate + ATP = (2R)-3-phospho-glyceroyl phosphate + ADP. Its pathway is carbohydrate degradation; glycolysis; pyruvate from D-glyceraldehyde 3-phosphate: step 2/5. The protein is Phosphoglycerate kinase (PGK) of Tetrahymena pyriformis.